Consider the following 738-residue polypeptide: Integrin beta-2-like protein (738 aa).

The first 22 residues, 1-22 (MLGQCTLLPVLAGLLSLESALS), serve as a signal peptide directing secretion. Over 23 to 671 (QLCTKDNVST…LVCAEISNTT (649 aa)) the chain is Extracellular. The 51-residue stretch at 24–74 (LCTKDNVSTCQDCIRSGPSCAWCQKLNFTGRGEPDSVRCDTPEQLLLKGCT) folds into the PSI domain. 23 cysteine pairs are disulfide-bonded: Cys-25–Cys-419, Cys-33–Cys-43, Cys-36–Cys-73, Cys-46–Cys-62, Cys-218–Cys-258, Cys-358–Cys-372, Cys-421–Cys-439, Cys-431–Cys-442, Cys-444–Cys-453, Cys-455–Cys-486, Cys-469–Cys-484, Cys-478–Cys-489, Cys-491–Cys-506, Cys-508–Cys-531, Cys-513–Cys-529, Cys-521–Cys-534, Cys-536–Cys-545, Cys-547–Cys-570, Cys-554–Cys-568, Cys-562–Cys-573, Cys-575–Cys-584, Cys-594–Cys-603, and Cys-600–Cys-664. N-linked (GlcNAc...) asparagine glycosylation is present at Asn-29. Asn-50, Asn-102, Asn-173, Asn-226, Asn-252, Asn-342, Asn-360, and Asn-386 each carry an N-linked (GlcNAc...) asparagine glycan. The 204-residue stretch at 126-329 (SVDLYFLMGL…DSSNVAQLIR (204 aa)) folds into the VWFA domain. 4 I-EGF domains span residues 421-454 (CQEQSQHHSLCGGKGAMECGICRCNSGYAGKNCE), 455-507 (CQTQ…QYCE), 508-546 (CNNVNCERYDGQVCGGPERGHCSCGRCFCRYGFVGSACQ), and 547-585 (CRMSTSGCLNNRMVECSGHGRCYCNRCLCDPGYQPPLCE). N-linked (GlcNAc...) asparagine glycosylation is present at Asn-473. Asn-627 and Asn-669 each carry an N-linked (GlcNAc...) asparagine glycan. The helical transmembrane segment at 672–692 (ILLGVIVGVLLAVIFLLVYCM) threads the bilayer. The Cytoplasmic segment spans residues 693 to 738 (VYLKGTQKAAKLPRKGGAQSTLAQQPHFQEPHHVEPVWNQERQGTQ). The tract at residues 709-738 (GAQSTLAQQPHFQEPHHVEPVWNQERQGTQ) is disordered. The segment covering 710-719 (AQSTLAQQPH) has biased composition (polar residues).

The protein belongs to the integrin beta chain family. In terms of assembly, monomer and homodimer. Unlike integrin beta chains, no alpha chain partner has yet been found. Post-translationally, N-glycosylated. As to expression, expressed predominantly in maturing and mature neutrophils.

The protein localises to the cell membrane. In terms of biological role, during inflammatory stimulation, plays a role in retaining Cxcl13-expressing cells at the site of the inflammatory response. The protein is Integrin beta-2-like protein of Mus musculus (Mouse).